The following is a 545-amino-acid chain: Lysine--tRNA ligase (545 aa).

Positions 41 to 49 match the 'HIGH' region motif; the sequence is PSGVPHLGH. The 'KMSKS' region motif lies at 306–310; it reads ALSSS.

It belongs to the class-I aminoacyl-tRNA synthetase family.

It localises to the cytoplasm. The catalysed reaction is tRNA(Lys) + L-lysine + ATP = L-lysyl-tRNA(Lys) + AMP + diphosphate. The chain is Lysine--tRNA ligase from Natronomonas pharaonis (strain ATCC 35678 / DSM 2160 / CIP 103997 / JCM 8858 / NBRC 14720 / NCIMB 2260 / Gabara) (Halobacterium pharaonis).